A 357-amino-acid polypeptide reads, in one-letter code: Arginine kinase Scy p 2.0101 (357 aa).

The region spanning 9–91 (KLEEGFKKLE…FDPIIEDYHK (83 aa)) is the Phosphagen kinase N-terminal domain. 64-68 (GVGVY) serves as a coordination point for L-arginine. IgE-binding and beta-hexosaminidase release from rat basophilic leukemia (RBL) cells stretches follow at residues 113 to 127 (VDPD…RVRC) and 127 to 155 (CGRS…VSST). The Phosphagen kinase C-terminal domain occupies 119-356 (FVISTRVRCG…LELIKIEKEM (238 aa)). 122 to 126 (STRVR) contacts ATP. His-185 lines the ATP pocket. Cys-201 and Cys-271 are oxidised to a cystine. The tract at residues 204–218 (WPTGRGIYHNDNKTF) is igE-binding and beta-hexosaminidase release from rat basophilic leukemia (RBL) cells. The segment at 211–225 (YHNDNKTFLVWCNEE) is igE-binding, but no beta-hexosaminidase release from rat basophilic leukemia (RBL) cells. Residue Glu-225 coordinates L-arginine. Arg-229 is an ATP binding site. Cys-271 contributes to the L-arginine binding site. ATP contacts are provided by residues 280–284 (RASVH) and 309–314 (RGTRGE). An L-arginine-binding site is contributed by Glu-314. The igE-binding, but no beta-hexosaminidase release from rat basophilic leukemia (RBL) cells stretch occupies residues 316-330 (TEAEGGVYDISNKRR).

The protein belongs to the ATP:guanido phosphotransferase family. In terms of processing, glycosylated. In terms of tissue distribution, muscle (at protein level).

It carries out the reaction L-arginine + ATP = N(omega)-phospho-L-arginine + ADP + H(+). Its function is as follows. Catalyzes the reversible transfer of high energy ATP gamma-phosphate group to L-arginine. The protein is Arginine kinase Scy p 2.0101 of Scylla paramamosain (Mud crab).